A 634-amino-acid chain; its full sequence is DNA-directed RNA polymerase subunit gamma (634 aa).

The Zn(2+) site is built by cysteine 74, cysteine 76, cysteine 89, and cysteine 92. Residues aspartate 471, aspartate 473, and aspartate 475 each contribute to the Mg(2+) site.

This sequence belongs to the RNA polymerase beta' chain family. RpoC1 subfamily. In terms of assembly, in cyanobacteria the RNAP catalytic core is composed of 2 alpha, 1 beta, 1 beta', 1 gamma and 1 omega subunit. When a sigma factor is associated with the core the holoenzyme is formed, which can initiate transcription. Requires Mg(2+) as cofactor. Zn(2+) serves as cofactor.

The catalysed reaction is RNA(n) + a ribonucleoside 5'-triphosphate = RNA(n+1) + diphosphate. In terms of biological role, DNA-dependent RNA polymerase catalyzes the transcription of DNA into RNA using the four ribonucleoside triphosphates as substrates. This Synechococcus sp. (strain CC9605) protein is DNA-directed RNA polymerase subunit gamma.